The primary structure comprises 351 residues: Photosystem II D2 protein (351 aa).

The helical transmembrane segment at 39–59 (CAYLAVGGWLTGTTFVTSWYT) threads the bilayer. Chlorophyll a is bound at residue His116. A helical transmembrane segment spans residues 123–139 (GFCLRQFEIARLVGLRP). 2 residues coordinate pheophytin a: Gln128 and Asn141. Residues 151–164 (VFVSVFLMYPLGQA) form a helical membrane-spanning segment. A chlorophyll a-binding site is contributed by His196. The helical transmembrane segment at 206–226 (GALLCAIHGATVQNTLFEDGD) threads the bilayer. The a plastoquinone site is built by His213 and Phe260. His213 lines the Fe cation pocket. A Fe cation-binding site is contributed by His267. The helical transmembrane segment at 277–293 (GLWTSAFGIVGLALNLR) threads the bilayer.

It belongs to the reaction center PufL/M/PsbA/D family. As to quaternary structure, PSII is composed of 1 copy each of membrane proteins PsbA, PsbB, PsbC, PsbD, PsbE, PsbF, PsbH, PsbI, PsbJ, PsbK, PsbL, PsbM, PsbT, PsbX, PsbY, PsbZ, Psb30/Ycf12, at least 3 peripheral proteins of the oxygen-evolving complex and a large number of cofactors. It forms dimeric complexes. It depends on The D1/D2 heterodimer binds P680, chlorophylls that are the primary electron donor of PSII, and subsequent electron acceptors. It shares a non-heme iron and each subunit binds pheophytin, quinone, additional chlorophylls, carotenoids and lipids. There is also a Cl(-1) ion associated with D1 and D2, which is required for oxygen evolution. The PSII complex binds additional chlorophylls, carotenoids and specific lipids. as a cofactor.

It is found in the plastid. Its subcellular location is the chloroplast thylakoid membrane. It catalyses the reaction 2 a plastoquinone + 4 hnu + 2 H2O = 2 a plastoquinol + O2. Its function is as follows. Photosystem II (PSII) is a light-driven water:plastoquinone oxidoreductase that uses light energy to abstract electrons from H(2)O, generating O(2) and a proton gradient subsequently used for ATP formation. It consists of a core antenna complex that captures photons, and an electron transfer chain that converts photonic excitation into a charge separation. The D1/D2 (PsbA/PsbD) reaction center heterodimer binds P680, the primary electron donor of PSII as well as several subsequent electron acceptors. D2 is needed for assembly of a stable PSII complex. The polypeptide is Photosystem II D2 protein (Pyropia yezoensis (Susabi-nori)).